We begin with the raw amino-acid sequence, 421 residues long: MVSASRPEALAAPVTTVATLVPHNATEPASPGEGKEDAFSKLKQKFMNELHKIPLPPWALIAIAIVAVLLVVTCCFCVCKKCLFKKKNKKKGKEKGGKNAINMKDVKDLGKTMKDQALKDDDAETGLTDGEEKEEPKEEEKLGKLQYSLDYDFQNNQLLVGIIQAAELPALDMGGTSDPYVKVFLLPDKKKKFETKVHRKTLNPVFNEQFTFKVPYSELGGKTLVMAVYDFDRFSKHDIIGEFKVPMNTVDFGHVTEEWRDLQSAEKEEQEKLGDICFSLRYVPTAGKLTVVILEAKNLKKMDVGGLSDPYVKIHLMQNGKRLKKKKTTIKKNTLNPYYNESFSFEVPFEQIQKVQVVVTVLDYDKIGKNDAIGKVFVGYNSTGAELRHWSDMLANPRRPIAQWHTLQVEEEVDAMLAVKK.

At Met-1–Pro-57 the chain is on the vesicular side. Asn-24 is a glycosylation site (N-linked (GlcNAc...) asparagine). A helical transmembrane segment spans residues Trp-58–Cys-79. S-palmitoyl cysteine attachment occurs at residues Cys-74, Cys-75, Cys-77, Cys-79, and Cys-82. Topologically, residues Lys-80–Lys-421 are cytoplasmic. Residues Thr-112–Lys-141 are disordered. Residues Asp-121 to Lys-133 are compositionally biased toward acidic residues. Thr-128 carries the phosphothreonine modification. The tract at residues Glu-135 to Asn-381 is phospholipid binding. In terms of domain architecture, C2 1 spans Lys-141–Arg-260. Residues Leu-171, Asp-172, and Asp-178 each coordinate Ca(2+). At Tyr-229 the chain carries Phosphotyrosine. Residues Asp-230, Phe-231, Asp-232, Ser-235, Lys-236, and Asp-238 each contribute to the Ca(2+) site. Ser-264 is subject to Phosphoserine. The C2 2 domain maps to Lys-272 to His-405. Positions 303 and 309 each coordinate Ca(2+). A phosphoserine mark is found at Ser-342 and Ser-344. Positions 363, 365, and 371 each coordinate Ca(2+).

Belongs to the synaptotagmin family. Homotetramer. Heterodimer; heterodimerizes with SYT2 in presence of calcium. Interacts with SCAMP5. Interacts with STON2. Forms a complex with SV2B, syntaxin 1 and SNAP25. Interacts with SV2A, SV2B and SV2C. Interacts with RIMS1. Interacts with PRRT2. Interacts with DNAJC5 in a phosphorylation-dependent manner. Interacts (via N-terminus) with RAB3A. Interacts with SYT12. Interacts with calmodulin. Interacts with DNM1 (via C-terminal proline-rich domain (PRD)); this interaction facilitates vesicle fission during clathrin-mediated endocytosis (CME). Ca(2+) serves as cofactor. In terms of processing, glycosylated. In terms of tissue distribution, expressed in the brain and adrenal medulla (at protein level).

The protein localises to the cytoplasmic vesicle. It localises to the secretory vesicle membrane. Its subcellular location is the secretory vesicle. The protein resides in the synaptic vesicle membrane. It is found in the chromaffin granule membrane. The protein localises to the cytoplasm. In terms of biological role, calcium sensor that participates in triggering neurotransmitter release at the synapse. May have a regulatory role in the membrane interactions during trafficking of synaptic vesicles at the active zone of the synapse. It binds acidic phospholipids with a specificity that requires the presence of both an acidic head group and a diacyl backbone. A Ca(2+)-dependent interaction between synaptotagmin and putative receptors for activated protein kinase C has also been reported. It can bind to at least three additional proteins in a Ca(2+)-independent manner; these are neurexins, syntaxin and AP2. Plays a role in dendrite formation by melanocytes. In Mus musculus (Mouse), this protein is Synaptotagmin-1.